Consider the following 620-residue polypeptide: Methionine--tRNA ligase (620 aa).

The 'HIGH' region motif lies at 11 to 21; that stretch reads PYANGPRHIGH. Residues Cys143, Cys146, Cys156, and Cys159 each coordinate Zn(2+). The 'KMSKS' region motif lies at 347-351; that stretch reads KFSSS. Ser350 contributes to the ATP binding site.

The protein belongs to the class-I aminoacyl-tRNA synthetase family. MetG type 1 subfamily. As to quaternary structure, monomer. Requires Zn(2+) as cofactor.

The protein localises to the cytoplasm. It catalyses the reaction tRNA(Met) + L-methionine + ATP = L-methionyl-tRNA(Met) + AMP + diphosphate. In terms of biological role, is required not only for elongation of protein synthesis but also for the initiation of all mRNA translation through initiator tRNA(fMet) aminoacylation. The sequence is that of Methionine--tRNA ligase from Bifidobacterium adolescentis (strain ATCC 15703 / DSM 20083 / NCTC 11814 / E194a).